An 81-amino-acid chain; its full sequence is Protein L83L (81 aa).

Residues 1 to 28 (MDTSLKNNDGALDADNKNYQDYKDEPDK) form a disordered region. The segment covering 14–28 (ADNKNYQDYKDEPDK) has biased composition (basic and acidic residues).

Belongs to the asfivirus L83L family. As to quaternary structure, interacts with host IL1B.

The protein localises to the host cytoplasm. Functionally, may subvert the host innate immune response by interacting with host IL1B and interfering with its function. This African swine fever virus (isolate Tick/South Africa/Pretoriuskop Pr4/1996) (ASFV) protein is Protein L83L.